A 176-amino-acid polypeptide reads, in one-letter code: Large ribosomal subunit protein eL20 (176 aa).

A Glycyl lysine isopeptide (Lys-Gly) (interchain with G-Cter in SUMO2) cross-link involves residue Lys11. A Phosphotyrosine modification is found at Tyr63. At Ser71 the chain carries Phosphoserine. At Lys76 the chain carries N6-succinyllysine. Residue Ser123 is modified to Phosphoserine. Residues Lys128 and Lys170 each participate in a glycyl lysine isopeptide (Lys-Gly) (interchain with G-Cter in SUMO2) cross-link.

The protein belongs to the eukaryotic ribosomal protein eL20 family. Component of the large ribosomal subunit. Binds IPO9 with high affinity.

It localises to the cytoplasm. In terms of biological role, component of the large ribosomal subunit. The ribosome is a large ribonucleoprotein complex responsible for the synthesis of proteins in the cell. The polypeptide is Large ribosomal subunit protein eL20 (RPL18A) (Oryctolagus cuniculus (Rabbit)).